The primary structure comprises 729 residues: FYN-binding protein 2 (729 aa).

Disordered regions lie at residues 18-130 (KFNA…EEKG), 170-320 (EGQK…SAEL), 371-408 (ELSP…PPKV), and 469-490 (VTKE…KTYD). 4 stretches are compositionally biased toward polar residues: residues 69–81 (GVSQ…TLKS), 89–99 (KTSSSSGTPEK), 190–216 (GAQT…SSVS), and 226–240 (KSPA…SQCQ). Residues 275-284 (GPPPPKPSKP) show a composition bias toward pro residues. Residues 374–402 (PRPKEEENTMEEKESWESEPLEPRKELHP) are compositionally biased toward basic and acidic residues. Positions 473-485 (TPSPSTIRSSSSS) are enriched in low complexity. Y489 carries the post-translational modification Phosphotyrosine. An SH2-binding; to LCP2 motif is present at residues 520-523 (YEDI). Positions 576–603 (DLGPRSQDDSQDGIIYDDVDTREKESND) are disordered. Residues 584–593 (DSQDGIIYDD) are compositionally biased toward acidic residues. Y591 is subject to Phosphotyrosine. The span at 594–603 (VDTREKESND) shows a compositional bias: basic and acidic residues. Residues 668-728 (LVINRAVACA…LVEHLDFKHQ (61 aa)) form the SH3 domain.

In terms of assembly, interacts with SKAP1, LCK and FYN. The phosphorylated form interacts with LCP2. In terms of processing, phosphorylation is required for its function in T-cell activation.

The protein resides in the membrane raft. Functionally, adapter protein that plays a role in T-cell receptor (TCR)-mediated activation of signaling pathways. Required for T-cell activation and integrin-mediated T-cell adhesion in response to TCR stimulation. The chain is FYN-binding protein 2 from Mus musculus (Mouse).